We begin with the raw amino-acid sequence, 383 residues long: 4-hydroxy-3-methylbut-2-en-1-yl diphosphate synthase (flavodoxin) (383 aa).

The [4Fe-4S] cluster site is built by Cys277, Cys280, Cys312, and Glu319.

It belongs to the IspG family. The cofactor is [4Fe-4S] cluster.

It catalyses the reaction (2E)-4-hydroxy-3-methylbut-2-enyl diphosphate + oxidized [flavodoxin] + H2O + 2 H(+) = 2-C-methyl-D-erythritol 2,4-cyclic diphosphate + reduced [flavodoxin]. It participates in isoprenoid biosynthesis; isopentenyl diphosphate biosynthesis via DXP pathway; isopentenyl diphosphate from 1-deoxy-D-xylulose 5-phosphate: step 5/6. Functionally, converts 2C-methyl-D-erythritol 2,4-cyclodiphosphate (ME-2,4cPP) into 1-hydroxy-2-methyl-2-(E)-butenyl 4-diphosphate. The sequence is that of 4-hydroxy-3-methylbut-2-en-1-yl diphosphate synthase (flavodoxin) from Caulobacter vibrioides (strain ATCC 19089 / CIP 103742 / CB 15) (Caulobacter crescentus).